The chain runs to 193 residues: uncharacterized protein (193 aa).

4 consecutive transmembrane segments (helical) span residues 40-56 (LYIA…LKLI), 63-79 (AAGL…SSLC), 86-110 (CSGY…IVSC), and 117-138 (FIFP…FQIY). Positions 158-193 (TTTKLSRSSSAPDLSCPSLSTQPTSPNQSLSAYKKY) are disordered.

This sequence belongs to the chlamydial CPn_0442/CT_006/TC_0274 family.

The protein resides in the cell membrane. This is an uncharacterized protein from Chlamydia muridarum (strain MoPn / Nigg).